Consider the following 347-residue polypeptide: Quinolinate synthase (347 aa).

Residues His47 and Ser68 each coordinate iminosuccinate. Cys113 lines the [4Fe-4S] cluster pocket. Iminosuccinate contacts are provided by residues 139–141 (YAN) and Ser156. Cys200 serves as a coordination point for [4Fe-4S] cluster. Iminosuccinate-binding positions include 226–228 (HPE) and Thr243. Cys297 is a [4Fe-4S] cluster binding site.

Belongs to the quinolinate synthase family. Type 1 subfamily. [4Fe-4S] cluster serves as cofactor.

Its subcellular location is the cytoplasm. The enzyme catalyses iminosuccinate + dihydroxyacetone phosphate = quinolinate + phosphate + 2 H2O + H(+). The protein operates within cofactor biosynthesis; NAD(+) biosynthesis; quinolinate from iminoaspartate: step 1/1. Its function is as follows. Catalyzes the condensation of iminoaspartate with dihydroxyacetone phosphate to form quinolinate. The polypeptide is Quinolinate synthase (Salmonella typhi).